The chain runs to 300 residues: MNFEKIQYIERKTGEIKTEKVMGEGALKFLYYNPFGKLALHAVVKRKFLSDWYGRKMSKPESKEKIKSFVEEMEIDMSEYKRPIEDYASFNDFFYRELKDGARKIDYNENVIVSPADGKILAYQNIKEVDKFFVKGSKFTLEEFFNDKELAKKYEDGTFVIVRLAPADYHRFHFPVDGEISEIKKILGYYYSVSTHAIKTNFRIFCENKREYAILKTEKFGDIAMFDIGATMVGGIVQTYKTNSSVKKGEEKGYFLFGGSTCILVFEKNKVVIDKDIIENTQNKIETRIYMGEKFGNEKN.

Active-site charge relay system; for autoendoproteolytic cleavage activity residues include Asp-117, His-173, and Ser-260. The Schiff-base intermediate with substrate; via pyruvic acid; for decarboxylase activity role is filled by Ser-260. A Pyruvic acid (Ser); by autocatalysis modification is found at Ser-260.

The protein belongs to the phosphatidylserine decarboxylase family. PSD-B subfamily. Prokaryotic type II sub-subfamily. In terms of assembly, heterodimer of a large membrane-associated beta subunit and a small pyruvoyl-containing alpha subunit. Pyruvate is required as a cofactor. In terms of processing, is synthesized initially as an inactive proenzyme. Formation of the active enzyme involves a self-maturation process in which the active site pyruvoyl group is generated from an internal serine residue via an autocatalytic post-translational modification. Two non-identical subunits are generated from the proenzyme in this reaction, and the pyruvate is formed at the N-terminus of the alpha chain, which is derived from the carboxyl end of the proenzyme. The autoendoproteolytic cleavage occurs by a canonical serine protease mechanism, in which the side chain hydroxyl group of the serine supplies its oxygen atom to form the C-terminus of the beta chain, while the remainder of the serine residue undergoes an oxidative deamination to produce ammonia and the pyruvoyl prosthetic group on the alpha chain. During this reaction, the Ser that is part of the protease active site of the proenzyme becomes the pyruvoyl prosthetic group, which constitutes an essential element of the active site of the mature decarboxylase.

Its subcellular location is the cell membrane. It catalyses the reaction a 1,2-diacyl-sn-glycero-3-phospho-L-serine + H(+) = a 1,2-diacyl-sn-glycero-3-phosphoethanolamine + CO2. It functions in the pathway phospholipid metabolism; phosphatidylethanolamine biosynthesis; phosphatidylethanolamine from CDP-diacylglycerol: step 2/2. Catalyzes the formation of phosphatidylethanolamine (PtdEtn) from phosphatidylserine (PtdSer). The protein is Phosphatidylserine decarboxylase proenzyme of Fusobacterium nucleatum subsp. nucleatum (strain ATCC 25586 / DSM 15643 / BCRC 10681 / CIP 101130 / JCM 8532 / KCTC 2640 / LMG 13131 / VPI 4355).